A 68-amino-acid chain; its full sequence is Putative alpha-conotoxin Qc alphaL-1 (68 aa).

An N-terminal signal peptide occupies residues 1–21 (MGMRMMFTMFLLVVLATTVVS). The propeptide occupies 22-49 (INLDHAFDGRNAAANNKATDLMARTVRR). Cys51 and Cys64 are oxidised to a cystine.

It belongs to the conotoxin A superfamily. As to expression, expressed by the venom duct.

It localises to the secreted. In terms of biological role, alpha-conotoxins act on postsynaptic membranes, they bind to the nicotinic acetylcholine receptors (nAChR) and thus inhibit them. This Conus quercinus (Oak cone) protein is Putative alpha-conotoxin Qc alphaL-1.